The sequence spans 67 residues: Large ribosomal subunit protein uL29 (67 aa).

It belongs to the universal ribosomal protein uL29 family.

This is Large ribosomal subunit protein uL29 from Heliobacterium modesticaldum (strain ATCC 51547 / Ice1).